The primary structure comprises 889 residues: Mitochondrial intermediate peptidase (889 aa).

The N-terminal 30 residues, 1-30 (MASTSKNAQRAAASVAHSYHVCLARRMSRL), are a transit peptide targeting the mitochondrion. Residues 60–112 (SSSLAAQRVQRPTSAGPILTNPISDHEKDNDELRSLFDAPPTSSSANHLRSSG) are disordered. The segment covering 83–94 (SDHEKDNDELRS) has biased composition (basic and acidic residues). Residues 100–112 (PTSSSANHLRSSG) show a composition bias toward polar residues. A Zn(2+)-binding site is contributed by H670. The active site involves E671. Zn(2+)-binding residues include H674 and H677.

Belongs to the peptidase M3 family. Requires Zn(2+) as cofactor.

Its subcellular location is the mitochondrion matrix. It catalyses the reaction Release of an N-terminal octapeptide as second stage of processing of some proteins imported into the mitochondrion.. In terms of biological role, cleaves proteins, imported into the mitochondrion, to their mature size. While most mitochondrial precursor proteins are processed to the mature form in one step by mitochondrial processing peptidase (MPP), the sequential cleavage by MIP of an octapeptide after initial processing by MPP is a required step for a subgroup of nuclear-encoded precursor proteins destined for the matrix or the inner membrane. The chain is Mitochondrial intermediate peptidase (OCT1) from Mycosarcoma maydis (Corn smut fungus).